We begin with the raw amino-acid sequence, 61 residues long: Large ribosomal subunit protein bL32 (61 aa).

Residues 1–22 (MAVPKKKTSKSRRDMRRSHHAL) are compositionally biased toward basic residues. Residues 1 to 27 (MAVPKKKTSKSRRDMRRSHHALKPSAY) form a disordered region.

This sequence belongs to the bacterial ribosomal protein bL32 family.

The sequence is that of Large ribosomal subunit protein bL32 from Rhodospirillum rubrum (strain ATCC 11170 / ATH 1.1.1 / DSM 467 / LMG 4362 / NCIMB 8255 / S1).